We begin with the raw amino-acid sequence, 157 residues long: Protein FAM218A (157 aa).

A disordered region spans residues 104–127; that stretch reads PAVTPPKLPGHSKSEGPPGKVRKR.

The sequence is that of Protein FAM218A (FAM218A) from Homo sapiens (Human).